Reading from the N-terminus, the 638-residue chain is 1-deoxy-D-xylulose-5-phosphate synthase (638 aa).

Residues His71 and 112 to 114 contribute to the thiamine diphosphate site; that span reads SHA. Residue Asp144 coordinates Mg(2+). Thiamine diphosphate is bound by residues 145-146, Asn173, Tyr284, and Glu365; that span reads GA. Residue Asn173 participates in Mg(2+) binding.

It belongs to the transketolase family. DXPS subfamily. As to quaternary structure, homodimer. Mg(2+) serves as cofactor. The cofactor is thiamine diphosphate.

It catalyses the reaction D-glyceraldehyde 3-phosphate + pyruvate + H(+) = 1-deoxy-D-xylulose 5-phosphate + CO2. Its pathway is metabolic intermediate biosynthesis; 1-deoxy-D-xylulose 5-phosphate biosynthesis; 1-deoxy-D-xylulose 5-phosphate from D-glyceraldehyde 3-phosphate and pyruvate: step 1/1. Its function is as follows. Catalyzes the acyloin condensation reaction between C atoms 2 and 3 of pyruvate and glyceraldehyde 3-phosphate to yield 1-deoxy-D-xylulose-5-phosphate (DXP). The sequence is that of 1-deoxy-D-xylulose-5-phosphate synthase from Mycobacterium bovis (strain ATCC BAA-935 / AF2122/97).